The sequence spans 734 residues: MSLKNEDQNDLSPKDSVKGNDQYRAPSGIHLEPEEESRNDFWQFEPSNLFRHPRIHLEPQEKSDNNFKKFVIKKLEKSCQCSSTKAKNTIFGFLPVLQWLPKYDLKKNILGDVMSGLIVGILLVPQSIAYSLLAGQEPIYGLYTSFFASLIYFILGTSRHISVGIFGILCLMIGEVVDRELYIAGYDTVHAASNESSLVNQISDKTCDRSCYAIIVGSTVTFVAGVYQVAMGFFQVGFVSVYLSDALLGGFVTGASFTILTSQVKYLLGLSLPRSAGVGSLITTWLHVFRNIRKTNICDLITSLLCLLVLLPTKELNERFKSKLKAPIPVELFVIVAATLASHFGKLNEKYGTSIAGHIPTGFMPPKAPDWNLIPRVAVDAIAIAIIGFAITVSLSEMFAKKHGYTVKANQEMYAIGFCNIIPSFFHCFTTSAALAKTLVKESTGCQTQVSGVMTALVLLLVLLVIAPLFFSLQKSVLGVITIVNLRGALCKFKDLPQMWRISRMDTVIWFVTMLSSALISTEIGLLTGVCFSMFCVILRTQKPKASLLGLVEDSEVFESMSAYKNLQAKSGIKIFRFVAPLYYVNKEYFKSVLYKKTLNPVLVKAAQRKAAKRKIKRETVTPSGIQDEVSVQLSHDPLEFHTIVIDCSAIQFLDTAGIHTLKEVRRDYEAVGIQVLLAQCNPSVRDSLARGEYCKKDEENLLFYSIYEAMTFAEDSQNQKERHIPNGPNFSSD.

A compositionally biased stretch (basic and acidic residues) spans 1 to 18 (MSLKNEDQNDLSPKDSVK). Residues 1–38 (MSLKNEDQNDLSPKDSVKGNDQYRAPSGIHLEPEEESR) form a disordered region. Phosphoserine is present on residues Ser-12 and Ser-16. A run of 2 helical transmembrane segments spans residues 113–133 (VMSG…YSLL) and 138–158 (PIYG…LGTS). N-linked (GlcNAc...) asparagine glycosylation is present at Asn-194. The next 6 membrane-spanning stretches (helical) occupy residues 214-234 (IIVG…MGFF), 237-257 (GFVS…GASF), 379-399 (VDAI…SEMF), 415-435 (AIGF…SAAL), 453-473 (VMTA…FFSL), and 519-539 (LIST…CVIL). In terms of domain architecture, STAS spans 563–714 (AYKNLQAKSG…YSIYEAMTFA (152 aa)).

It belongs to the SLC26A/SulP transporter (TC 2.A.53) family. N-glycosylated.

The protein resides in the cell membrane. It localises to the apical cell membrane. The catalysed reaction is oxalate(in) + sulfate(out) = oxalate(out) + sulfate(in). It carries out the reaction sulfate(out) + 2 chloride(in) = sulfate(in) + 2 chloride(out). The enzyme catalyses oxalate(out) + 2 chloride(in) = oxalate(in) + 2 chloride(out). It catalyses the reaction bromide(in) + chloride(out) = bromide(out) + chloride(in). The catalysed reaction is nitrate(in) + chloride(out) = nitrate(out) + chloride(in). It carries out the reaction iodide(in) + chloride(out) = iodide(out) + chloride(in). Functionally, sulfate transporter which mediates sulfate uptake into chondrocytes in order to maintain adequate sulfation of proteoglycans which is needed for cartilage development. Mediates electroneutral anion exchange of sulfate ions for oxalate ions, sulfate and oxalate ions for chloride and/or hydroxyl ions and chloride ions for bromide, iodide and nitrate ions. The coupling of sulfate transport to both hydroxyl and chloride ions likely serves to ensure transport at both acidic pH when most sulfate uptake is mediated by sulfate-hydroxide exchange and alkaline pH when most sulfate uptake is mediated by sulfate-chloride exchange. Essential for chondrocyte proliferation, differentiation and cell size expansion. This is Sulfate transporter (SLC26A2) from Bos taurus (Bovine).